The chain runs to 890 residues: Protein translocase subunit SecA (890 aa).

ATP is bound by residues glutamine 86, glycine 104–threonine 108, and aspartate 493. The segment covering glutamate 851–arginine 872 has biased composition (basic and acidic residues). The segment at glutamate 851–asparagine 873 is disordered. Residues cysteine 876, cysteine 878, cysteine 887, and cysteine 888 each contribute to the Zn(2+) site.

The protein belongs to the SecA family. As to quaternary structure, monomer and homodimer. Part of the essential Sec protein translocation apparatus which comprises SecA, SecYEG and auxiliary proteins SecDF. Other proteins may also be involved. It depends on Zn(2+) as a cofactor.

It localises to the cell membrane. Its subcellular location is the cytoplasm. It carries out the reaction ATP + H2O + cellular proteinSide 1 = ADP + phosphate + cellular proteinSide 2.. Functionally, part of the Sec protein translocase complex. Interacts with the SecYEG preprotein conducting channel. Has a central role in coupling the hydrolysis of ATP to the transfer of proteins into and across the cell membrane, serving as an ATP-driven molecular motor driving the stepwise translocation of polypeptide chains across the membrane. The sequence is that of Protein translocase subunit SecA from Alkaliphilus oremlandii (strain OhILAs) (Clostridium oremlandii (strain OhILAs)).